We begin with the raw amino-acid sequence, 736 residues long: Catalase-peroxidase (736 aa).

Residues 96-224 constitute a cross-link (tryptophyl-tyrosyl-methioninium (Trp-Tyr) (with M-250)); it reads WHSAGTYRTG…LAAVQMGLIY (129 aa). H97 functions as the Proton acceptor in the catalytic mechanism. A cross-link (tryptophyl-tyrosyl-methioninium (Tyr-Met) (with W-96)) is located at residues 224-250; it reads YVNPEGPDGNPDPVASGRDVRETFGRM. H265 contacts heme b.

This sequence belongs to the peroxidase family. Peroxidase/catalase subfamily. As to quaternary structure, homodimer or homotetramer. Heme b is required as a cofactor. Post-translationally, formation of the three residue Trp-Tyr-Met cross-link is important for the catalase, but not the peroxidase activity of the enzyme.

The enzyme catalyses H2O2 + AH2 = A + 2 H2O. The catalysed reaction is 2 H2O2 = O2 + 2 H2O. Functionally, bifunctional enzyme with both catalase and broad-spectrum peroxidase activity. The sequence is that of Catalase-peroxidase from Pelobacter propionicus (strain DSM 2379 / NBRC 103807 / OttBd1).